A 1256-amino-acid chain; its full sequence is Putative protein DDB_G0292252 (1256 aa).

Disordered regions lie at residues 1-53, 145-243, 898-951, and 1069-1136; these read MSDD…NNNN, LLNG…SISR, EQQQ…PVET, and SHPT…ATIS. Over residues 147 to 214 the composition is skewed to low complexity; sequence NGNNSNNNSN…NGNNINTSNG (68 aa). Polar residues predominate over residues 222 to 243; it reads QTESTEQDFTSTSQNSTPSISR. 2 stretches are compositionally biased toward low complexity: residues 898–916 and 925–942; these read EQQQ…SNNE and TTAA…TTTT. Polar residues predominate over residues 1069 to 1079; it reads SHPTIQSTSSP. The segment covering 1080–1136 has biased composition (low complexity); that stretch reads STSSSNNNNSTTTATNNNGNNGNNNNGNGNNNNNNNNNNNNNNNNNNNNNNGPATIS.

The chain is Putative protein DDB_G0292252 from Dictyostelium discoideum (Social amoeba).